Here is a 339-residue protein sequence, read N- to C-terminus: Photosystem II assembly lipoprotein Ycf48 (339 aa).

A signal peptide spans 1 to 23 (MNRLIKFSFNLILIFVLGLGLSG). Residue cysteine 24 is the site of N-palmitoyl cysteine attachment. The S-diacylglycerol cysteine moiety is linked to residue cysteine 24.

Belongs to the Ycf48 family. In terms of assembly, part of early PSII assembly complexes which includes D1 (psbA) and PsbI; not found in mature PSII. Binds to the lumenal side of PSII complexes. Interacts with YidC.

It is found in the cellular thylakoid membrane. Its function is as follows. A factor required for optimal assembly of photosystem II (PSII), acting in the early stages of PSII assembly. Also plays a role in replacement of photodamaged D1 (psbA). Assists YidC in synthesis of chlorophyll-binding proteins. The protein is Photosystem II assembly lipoprotein Ycf48 of Prochlorococcus marinus (strain SARG / CCMP1375 / SS120).